A 456-amino-acid polypeptide reads, in one-letter code: Chromosomal replication initiator protein DnaA (456 aa).

Residues 1–83 form a domain I, interacts with DnaA modulators region; the sequence is MTASLWQQCL…LRFDIGNRPH (83 aa). The interval 83 to 119 is domain II; that stretch reads HPVAVARAPARGADPVNNSQKSWESKAEAKPEPNHKS. The interval 92 to 122 is disordered; sequence ARGADPVNNSQKSWESKAEAKPEPNHKSNTN. The segment covering 105 to 117 has biased composition (basic and acidic residues); it reads WESKAEAKPEPNH. The domain III, AAA+ region stretch occupies residues 120–336; sequence NTNVNYTFEN…GALNRVIANA (217 aa). ATP-binding residues include Gly-164, Gly-166, Lys-167, and Thr-168. The domain IV, binds dsDNA stretch occupies residues 337–456; it reads NFTGRAINID…YSNLIRTLSS (120 aa).

Belongs to the DnaA family. In terms of assembly, oligomerizes as a right-handed, spiral filament on DNA at oriC.

Its subcellular location is the cytoplasm. In terms of biological role, plays an essential role in the initiation and regulation of chromosomal replication. ATP-DnaA binds to the origin of replication (oriC) to initiate formation of the DNA replication initiation complex once per cell cycle. Binds the DnaA box (a 9 base pair repeat at the origin) and separates the double-stranded (ds)DNA. Forms a right-handed helical filament on oriC DNA; dsDNA binds to the exterior of the filament while single-stranded (ss)DNA is stabiized in the filament's interior. The ATP-DnaA-oriC complex binds and stabilizes one strand of the AT-rich DNA unwinding element (DUE), permitting loading of DNA polymerase. After initiation quickly degrades to an ADP-DnaA complex that is not apt for DNA replication. Binds acidic phospholipids. In Aeromonas hydrophila subsp. hydrophila (strain ATCC 7966 / DSM 30187 / BCRC 13018 / CCUG 14551 / JCM 1027 / KCTC 2358 / NCIMB 9240 / NCTC 8049), this protein is Chromosomal replication initiator protein DnaA.